The chain runs to 315 residues: MSSRTNISCLQEAKRVAIFGGTHGNEMSGIVLANMWIQNATEIERKGLVCKPFITNPRAVEKCTRYIDTDLNRAFTPENLSASELEALPYEVQRAKEINQMFGPKGGSDAYDVIFDLHNTTSNMGSTLILESSTDLFNLQMVHYIKKAMAPHTCSVLLNEHPQLKYSTTRSVAKHPVGLEVGPQPQGVLRSNVFESMRTILKHALDFIELFNNGVEFPPCTVNVFRVQERMDYPRDTNGNITAMVHPHLQDCDWEPLNRGDPMFLTFDGRTILYEGANTVYPTFINEAAYYEKQQAFVTTCREILAANAIRKAFK.

Positions 23 and 26 each coordinate Zn(2+). Residues Arg-65 and 72–73 (NR) contribute to the substrate site. Residue His-118 participates in Zn(2+) binding. Substrate is bound by residues 166–170 (YSTTR), Glu-180, and Tyr-290. Residue Glu-180 is part of the active site.

It belongs to the AspA/AstE family. Aspartoacylase subfamily. The cofactor is Zn(2+).

Its subcellular location is the cytoplasm. It localises to the nucleus. The enzyme catalyses an N-acyl-L-aspartate + H2O = a carboxylate + L-aspartate. In terms of biological role, catalyzes the deacetylation of N-acetylaspartic acid (NAA) to produce acetate and L-aspartate. In Danio rerio (Zebrafish), this protein is Aspartoacylase (aspa).